The primary structure comprises 363 residues: MPEKTIVVLPGDHVGTEITAEAIKVLKAIEEVKPEIKFNFQHHLIGGAAIDATGVPLPDDALEASKKADAVLLGAVGGPKWGTGAVRPEQGLLKIRKELNLYANLRPCNFASESLLDLSPIKAEVVKGTDFVVVRELVGGIYFGERKEDDGSGVASDTETYSVPEVQRITRMAAFMALQHNPPLPIWSLDKANVLASSRLWRKVVTETIEKEFPQLTVQHQLIDSAAMILIKYPTQLNGIVITSNMFGDIISDEASVIPGSLGLLPSASLASLPDSNKAFGLYEPCHGSAPDLPANKVNPIATILSAAMMLKLSLDLYEEGVAVETAVKQVLDAGIRTGDLKGTNSTTEVGDAVAEAVKKILA.

Residue 78–89 participates in NAD(+) binding; that stretch reads GPKWGTGAVRPE. Residues Arg-96, Arg-106, Arg-135, and Asp-224 each contribute to the substrate site. Mg(2+)-binding residues include Asp-224, Asp-249, and Asp-253. Position 288–299 (288–299) interacts with NAD(+); that stretch reads GSAPDLPANKVN.

Belongs to the isocitrate and isopropylmalate dehydrogenases family. Homodimer. The cofactor is Mg(2+). It depends on Mn(2+) as a cofactor.

It localises to the cytoplasm. The enzyme catalyses (2R,3S)-3-isopropylmalate + NAD(+) = 4-methyl-2-oxopentanoate + CO2 + NADH. It functions in the pathway amino-acid biosynthesis; L-leucine biosynthesis; L-leucine from 3-methyl-2-oxobutanoate: step 3/4. Functionally, catalyzes the oxidation of 3-carboxy-2-hydroxy-4-methylpentanoate (3-isopropylmalate) to 3-carboxy-4-methyl-2-oxopentanoate. The product decarboxylates to 4-methyl-2 oxopentanoate. In Cyberlindnera jadinii (Torula yeast), this protein is 3-isopropylmalate dehydrogenase (LEU2).